A 151-amino-acid chain; its full sequence is Large ribosomal subunit protein uL22 (151 aa).

The segment covering 1 to 18 (MARINYSINGDPETTSKA) has biased composition (polar residues). The tract at residues 1-23 (MARINYSINGDPETTSKAMGSEL) is disordered.

Belongs to the universal ribosomal protein uL22 family. In terms of assembly, part of the 50S ribosomal subunit.

In terms of biological role, this protein binds specifically to 23S rRNA. It makes multiple contacts with different domains of the 23S rRNA in the assembled 50S subunit and ribosome. Its function is as follows. The globular domain of the protein is located near the polypeptide exit tunnel on the outside of the subunit, while an extended beta-hairpin is found that lines the wall of the exit tunnel in the center of the 70S ribosome. The sequence is that of Large ribosomal subunit protein uL22 from Methanosarcina acetivorans (strain ATCC 35395 / DSM 2834 / JCM 12185 / C2A).